A 77-amino-acid polypeptide reads, in one-letter code: Distinctin-like peptide (77 aa).

Residues 1–19 (LKKSLFLVTFLALVPLFLC) form the signal peptide. A propeptide spanning residues 20-39 (EEEKREEENEERQDDDQSEE) is cleaved from the precursor.

This sequence belongs to the frog skin active peptide (FSAP) family. As to expression, expressed by the skin glands.

It localises to the secreted. Has antimicrobial activity. This chain is Distinctin-like peptide, found in Pithecopus azureus (Orange-legged monkey tree frog).